The sequence spans 303 residues: Sterol-4-alpha-carboxylate 3-dehydrogenase ERG26, decarboxylating (303 aa).

Residues 8-9 (SL) and 30-32 (TAS) contribute to the NADP(+) site. A substrate-binding site is contributed by S71. The segment at 77 to 96 (PTQEPTSEENAHRYDENNAP) is disordered. NADP(+) is bound by residues Y102, K106, and 128–131 (IPGI). Y102 contributes to the substrate binding site. The active-site Proton donor is the K106.

The protein belongs to the 3-beta-HSD family. Heterotetramer of ERG25, ERG26, ERG27 and ERG28. ERG28 acts as a scaffold to tether ERG27 and other 4,4-demethylation-related enzymes, forming a demethylation enzyme complex, in the endoplasmic reticulum.

Its subcellular location is the endoplasmic reticulum membrane. It participates in steroid metabolism; ergosterol biosynthesis. In terms of biological role, sterol-4-alpha-carboxylate 3-dehydrogenase; part of the third module of ergosterol biosynthesis pathway that includes the late steps of the pathway. ERG26 is a catalytic component of the C-4 demethylation complex that catalyzes the conversion of 4,4-dimethylfecosterol into fecosterol via 4-methylfecosterol. The third module or late pathway involves the ergosterol synthesis itself through consecutive reactions that mainly occur in the endoplasmic reticulum (ER) membrane. Firstly, the squalene synthase ERG9 catalyzes the condensation of 2 farnesyl pyrophosphate moieties to form squalene, which is the precursor of all steroids. Squalene synthase is crucial for balancing the incorporation of farnesyl diphosphate (FPP) into sterol and nonsterol isoprene synthesis. Secondly, squalene is converted into lanosterol by the consecutive action of the squalene epoxidase ERG1 and the lanosterol synthase ERG7. Then, the delta(24)-sterol C-methyltransferase ERG6 methylates lanosterol at C-24 to produce eburicol. Eburicol is the substrate of the sterol 14-alpha demethylase encoded by CYP51A, CYP51B and CYP51C, to yield 4,4,24-trimethyl ergosta-8,14,24(28)-trienol. CYP51B encodes the enzyme primarily responsible for sterol 14-alpha-demethylation, and plays an essential role in ascospore formation. CYP51A encodes an additional sterol 14-alpha-demethylase, induced on ergosterol depletion and responsible for the intrinsic variation in azole sensitivity. The third CYP51 isoform, CYP51C, does not encode a sterol 14-alpha-demethylase, but is required for full virulence on host wheat ears. The C-14 reductase ERG24 then reduces the C14=C15 double bond which leads to 4,4-dimethylfecosterol. A sequence of further demethylations at C-4, involving the C-4 demethylation complex containing the C-4 methylsterol oxidases ERG25, the sterol-4-alpha-carboxylate 3-dehydrogenase ERG26 and the 3-keto-steroid reductase ERG27, leads to the production of fecosterol via 4-methylfecosterol. ERG28 has a role as a scaffold to help anchor ERG25, ERG26 and ERG27 to the endoplasmic reticulum. The C-8 sterol isomerase ERG2 then catalyzes the reaction which results in unsaturation at C-7 in the B ring of sterols and thus converts fecosterol to episterol. The sterol-C5-desaturases ERG3A and ERG3BB then catalyze the introduction of a C-5 double bond in the B ring to produce 5-dehydroepisterol. The C-22 sterol desaturases ERG5A and ERG5B further convert 5-dehydroepisterol into ergosta-5,7,22,24(28)-tetraen-3beta-ol by forming the C-22(23) double bond in the sterol side chain. Finally, ergosta-5,7,22,24(28)-tetraen-3beta-ol is substrate of the C-24(28) sterol reductase ERG4 to produce ergosterol. This chain is Sterol-4-alpha-carboxylate 3-dehydrogenase ERG26, decarboxylating, found in Gibberella zeae (strain ATCC MYA-4620 / CBS 123657 / FGSC 9075 / NRRL 31084 / PH-1) (Wheat head blight fungus).